The primary structure comprises 820 residues: Ribosome biogenesis protein ERB1 (820 aa).

Residues M1–P111 form a disordered region. The segment covering V9 to E19 has biased composition (basic and acidic residues). A compositionally biased stretch (acidic residues) spans P20–V48. Positions V53–E64 are enriched in basic and acidic residues. Over residues N65–D110 the composition is skewed to acidic residues. The interval R282–S395 is required for interaction with NOP7. Positions S395–P431 are required for interaction with YTM1. WD repeat units lie at residues G447 to R486 and A495 to E535. The interval G545–A585 is disordered. The segment covering G551 to D564 has biased composition (basic and acidic residues). WD repeat units lie at residues T604–P646, K649–K687, P690–K729, Y733–T773, and K789–T820.

Belongs to the WD repeat BOP1/ERB1 family. Component of the NOP7 complex, composed of ERB1, NOP7 and YTM1. The complex is held together by ERB1, which interacts with NOP7 via its N-terminal domain and with YTM1 via a high-affinity interaction between the seven-bladed beta-propeller domains of the 2 proteins. The NOP7 complex associates with the 66S pre-ribosome.

It localises to the nucleus. The protein resides in the nucleolus. It is found in the nucleoplasm. Component of the NOP7 complex, which is required for maturation of the 25S and 5.8S ribosomal RNAs and formation of the 60S ribosome. The polypeptide is Ribosome biogenesis protein ERB1 (Yarrowia lipolytica (strain CLIB 122 / E 150) (Yeast)).